Here is a 620-residue protein sequence, read N- to C-terminus: 1-deoxy-D-xylulose-5-phosphate synthase (620 aa).

Thiamine diphosphate contacts are provided by residues H80 and 121–123 (GHS). D152 serves as a coordination point for Mg(2+). Thiamine diphosphate contacts are provided by residues 153–154 (GA), N181, Y288, and E370. Position 181 (N181) interacts with Mg(2+).

It belongs to the transketolase family. DXPS subfamily. In terms of assembly, homodimer. The cofactor is Mg(2+). Thiamine diphosphate serves as cofactor.

It catalyses the reaction D-glyceraldehyde 3-phosphate + pyruvate + H(+) = 1-deoxy-D-xylulose 5-phosphate + CO2. It functions in the pathway metabolic intermediate biosynthesis; 1-deoxy-D-xylulose 5-phosphate biosynthesis; 1-deoxy-D-xylulose 5-phosphate from D-glyceraldehyde 3-phosphate and pyruvate: step 1/1. Its function is as follows. Catalyzes the acyloin condensation reaction between C atoms 2 and 3 of pyruvate and glyceraldehyde 3-phosphate to yield 1-deoxy-D-xylulose-5-phosphate (DXP). The polypeptide is 1-deoxy-D-xylulose-5-phosphate synthase (Sodalis glossinidius (strain morsitans)).